The primary structure comprises 265 residues: Phosphonates import ATP-binding protein PhnC 1 (265 aa).

The ABC transporter domain maps to leucine 3–glutamine 247. Position 36-43 (glycine 36–threonine 43) interacts with ATP. The interval asparagine 245–cysteine 265 is disordered.

The protein belongs to the ABC transporter superfamily. Phosphonates importer (TC 3.A.1.9.1) family. As to quaternary structure, the complex is composed of two ATP-binding proteins (PhnC), two transmembrane proteins (PhnE) and a solute-binding protein (PhnD).

The protein localises to the cell inner membrane. The catalysed reaction is phosphonate(out) + ATP + H2O = phosphonate(in) + ADP + phosphate + H(+). In terms of biological role, part of the ABC transporter complex PhnCDE involved in phosphonates import. Responsible for energy coupling to the transport system. The chain is Phosphonates import ATP-binding protein PhnC 1 from Pseudomonas savastanoi pv. phaseolicola (strain 1448A / Race 6) (Pseudomonas syringae pv. phaseolicola (strain 1448A / Race 6)).